The sequence spans 294 residues: Cytidine deaminase (294 aa).

CMP/dCMP-type deaminase domains follow at residues 48–168 and 186–294; these read DEDA…FGPK and LTGD…VLLA. 89 to 91 is a binding site for substrate; the sequence is NME. Residue H102 participates in Zn(2+) binding. E104 functions as the Proton donor in the catalytic mechanism. 2 residues coordinate Zn(2+): C129 and C132.

This sequence belongs to the cytidine and deoxycytidylate deaminase family. As to quaternary structure, homodimer. It depends on Zn(2+) as a cofactor.

The catalysed reaction is cytidine + H2O + H(+) = uridine + NH4(+). The enzyme catalyses 2'-deoxycytidine + H2O + H(+) = 2'-deoxyuridine + NH4(+). This enzyme scavenges exogenous and endogenous cytidine and 2'-deoxycytidine for UMP synthesis. In Escherichia coli (strain K12), this protein is Cytidine deaminase.